A 224-amino-acid chain; its full sequence is Heme response regulator HssR (224 aa).

Positions 3–116 constitute a Response regulatory domain; sequence TCLIVDDDPK…ELMFRIKAVL (114 aa). Aspartate 52 is subject to 4-aspartylphosphate. Positions 124 to 222 form a DNA-binding region, ompR/PhoB-type; the sequence is NNEVSIGNLT…VRGLGYKVDD (99 aa).

In terms of processing, phosphorylated by HssS.

The protein localises to the cytoplasm. Functionally, member of the two-component regulatory system HssS/HssR involved in intracellular heme homeostasis and tempering of staphylococcal virulence. Phosphorylated HssR binds to a direct repeat sequence within hrtAB promoter and activates the expression of hrtAB, an efflux pump, in response to extracellular heme, hemin, hemoglobin or blood. This chain is Heme response regulator HssR (hssR), found in Staphylococcus saprophyticus subsp. saprophyticus (strain ATCC 15305 / DSM 20229 / NCIMB 8711 / NCTC 7292 / S-41).